A 121-amino-acid chain; its full sequence is Small ribosomal subunit protein uS13 (121 aa).

A disordered region spans residues 94–121 (DLPVRGQRTKTNARTRKGPRKSGVQLKK). The span at 100–121 (QRTKTNARTRKGPRKSGVQLKK) shows a compositional bias: basic residues.

The protein belongs to the universal ribosomal protein uS13 family. As to quaternary structure, part of the 30S ribosomal subunit. Forms a loose heterodimer with protein S19. Forms two bridges to the 50S subunit in the 70S ribosome.

In terms of biological role, located at the top of the head of the 30S subunit, it contacts several helices of the 16S rRNA. In the 70S ribosome it contacts the 23S rRNA (bridge B1a) and protein L5 of the 50S subunit (bridge B1b), connecting the 2 subunits; these bridges are implicated in subunit movement. Contacts the tRNAs in the A and P-sites. This is Small ribosomal subunit protein uS13 from Polynucleobacter necessarius subsp. necessarius (strain STIR1).